The sequence spans 573 residues: Probable zinc metallopeptidase EGY3, chloroplastic (573 aa).

The N-terminal 50 residues, 1–50 (MASLFVSTPSSSLTLKSCHSLHLRRFDRAEFSNFGKASVNQTTRSRHSLR), are a transit peptide targeting the chloroplast. The segment at 38-105 (SVNQTTRSRH…EKKSKQQEMD (68 aa)) is disordered. 2 stretches are compositionally biased toward basic and acidic residues: residues 52–62 (SAEDDRVREPV) and 96–105 (EKKSKQQEMD). A coiled-coil region spans residues 122 to 185 (EAAIKLEKTR…KALDLNKLKS (64 aa)). Transmembrane regions (helical) follow at residues 274-294 (VSAI…SGFF), 305-325 (IANV…SEIA), 376-396 (ASAY…DGSF), 414-434 (PLLS…GNVL), 441-461 (VGVP…VTSL), 493-513 (LLLG…GLFA), and 536-556 (FAWG…NSGG).

It belongs to the peptidase M50B family.

Its subcellular location is the plastid. It localises to the chloroplast membrane. Probable membrane-associated metalloprotease that may be involved in chloroplast development. In Arabidopsis thaliana (Mouse-ear cress), this protein is Probable zinc metallopeptidase EGY3, chloroplastic (EGY3).